Consider the following 338-residue polypeptide: Fructose-1,6-bisphosphatase class 1 1 (338 aa).

Positions 94, 116, 118, and 119 each coordinate Mg(2+). Substrate-binding positions include 119 to 122 (DGSS), asparagine 210, and lysine 276. Glutamate 282 is a binding site for Mg(2+).

This sequence belongs to the FBPase class 1 family. In terms of assembly, homotetramer. It depends on Mg(2+) as a cofactor.

The protein localises to the cytoplasm. It carries out the reaction beta-D-fructose 1,6-bisphosphate + H2O = beta-D-fructose 6-phosphate + phosphate. It functions in the pathway carbohydrate biosynthesis; gluconeogenesis. In Paraburkholderia phymatum (strain DSM 17167 / CIP 108236 / LMG 21445 / STM815) (Burkholderia phymatum), this protein is Fructose-1,6-bisphosphatase class 1 1.